We begin with the raw amino-acid sequence, 263 residues long: tRNA (guanine-N(1)-)-methyltransferase (263 aa).

S-adenosyl-L-methionine contacts are provided by residues G113 and 137-142 (LGDYVL).

Belongs to the RNA methyltransferase TrmD family. In terms of assembly, homodimer.

The protein localises to the cytoplasm. The enzyme catalyses guanosine(37) in tRNA + S-adenosyl-L-methionine = N(1)-methylguanosine(37) in tRNA + S-adenosyl-L-homocysteine + H(+). Its function is as follows. Specifically methylates guanosine-37 in various tRNAs. In Renibacterium salmoninarum (strain ATCC 33209 / DSM 20767 / JCM 11484 / NBRC 15589 / NCIMB 2235), this protein is tRNA (guanine-N(1)-)-methyltransferase.